The chain runs to 868 residues: Probable mixed-linked glucan synthase 3 (868 aa).

Positions 36–68 (ERKAAGGGGGGAKGKHWAAADKGERRAAKECGG) are disordered. Basic and acidic residues predominate over residues 53–68 (AAADKGERRAAKECGG). Helical transmembrane passes span 86 to 106 (LLHP…LFFG) and 116 to 136 (IMWF…SWLL). D211 is a catalytic residue. Positions 412 and 414 each coordinate substrate. Residue D573 is part of the active site. Transmembrane regions (helical) follow at residues 649 to 669 (IYPV…MWLI), 686 to 706 (LLVI…WAGI), 717 to 737 (FFMI…VVNL), 771 to 791 (MLIP…VAIG), 810 to 830 (MGLL…LAIM), and 838 to 858 (IILV…YVAT).

The protein belongs to the glycosyltransferase 2 family. Plant cellulose synthase-like F subfamily.

The protein resides in the golgi apparatus membrane. Its function is as follows. May catalyze both beta-1,3 and beta-1,4 glycosidic linkage on beta-D-glucan. Essential for (1,3;1,4)-beta-D-glucans synthesis in grasses and cereals (Poaceae). The mixed-linked glucans (which are not present in walls of dicotyledons or most other monocotyledonous plants) are particularly important constituents of the walls of the starchy endosperm and aleurone cells of cereal grains such as oats, wheat, rice and barley. They can account for up to 70% by weight of the wall. The sequence is that of Probable mixed-linked glucan synthase 3 (CSLF3) from Oryza sativa subsp. japonica (Rice).